Here is a 386-residue protein sequence, read N- to C-terminus: Probable protein phosphatase 2C 36 (386 aa).

A PPM-type phosphatase domain is found at 60–363; the sequence is ELSVAVVQGN…DDITVIVLFI (304 aa). Residues Asp94, Gly95, Asp295, and Asp354 each coordinate Mn(2+).

Belongs to the PP2C family. Mg(2+) serves as cofactor. Requires Mn(2+) as cofactor.

The catalysed reaction is O-phospho-L-seryl-[protein] + H2O = L-seryl-[protein] + phosphate. The enzyme catalyses O-phospho-L-threonyl-[protein] + H2O = L-threonyl-[protein] + phosphate. The polypeptide is Probable protein phosphatase 2C 36 (Oryza sativa subsp. japonica (Rice)).